The primary structure comprises 237 residues: Lectin (237 aa).

2 residues coordinate Mn(2+): glutamate 8 and aspartate 10. Aspartate 10, tyrosine 12, asparagine 14, and aspartate 19 together coordinate Ca(2+). A carbohydrate is bound by residues tyrosine 12 and asparagine 14. The Mn(2+) site is built by aspartate 19 and histidine 24. 98–100 (GLY) contacts a carbohydrate. Aspartate 208 contributes to the Ca(2+) binding site. Glycine 227 and arginine 228 together coordinate a carbohydrate.

Belongs to the leguminous lectin family. Homotetramer; dimer of dimers. Concanavalin A-like lectins of the Diocleinae subtribe undergo proteolytic processing referred to as circular permutation. The propeptide is split into an N-terminal and a C-terminal part, the gamma and beta chain, respectively. These are then religated in beta-gamma order to form the mature alpha chain. The beta and gamma chains can often be detected in cell extracts. Residues 1-118 of the mature chain, as displayed here, probably constitute the beta chain in the propeptide, residues 119-237 the gamma chain.

Functionally, D-mannose/D-glucose-binding lectin with hemagglutinating activity towards rabbit and human erythrocytes. In rats, induces dose-dependent paw edema. Has low cytotoxicity against Artemisia sp. This Macropsychanthus comosus (Sea purse) protein is Lectin.